The sequence spans 200 residues: Adenylyl-sulfate kinase (200 aa).

35–42 lines the ATP pocket; sequence GLPASGKS. Residue Ser109 is the Phosphoserine intermediate of the active site.

This sequence belongs to the APS kinase family.

The enzyme catalyses adenosine 5'-phosphosulfate + ATP = 3'-phosphoadenylyl sulfate + ADP + H(+). It participates in sulfur metabolism; hydrogen sulfide biosynthesis; sulfite from sulfate: step 2/3. Functionally, catalyzes the synthesis of activated sulfate. The protein is Adenylyl-sulfate kinase of Thermodesulfovibrio yellowstonii (strain ATCC 51303 / DSM 11347 / YP87).